We begin with the raw amino-acid sequence, 325 residues long: Necdin (325 aa).

Disordered stretches follow at residues 1-69 and 77-96; these read MSEQ…IEDV and AAEE…IPAP. Residues 102–301 enclose the MAGE domain; sequence LVQKAHELMW…QAWPSRYREA (200 aa).

Binds to the transactivation domains of E2F1 and p53. Binds also SV40 large T antigen and adenovirus E1A. Interacts with nucleobindin 1 and 2. Brain specific. Not detected in other tissues. Expressed in postmitotic neurons. In adult brain the highest expression is in hypothalamus. Highly expressed in thalamus and midbrain. Relatively low levels are in cerebral cortex, hippocampus, striatum, olfactory bulb, cerebellum, pons and spinal cord. Also detected in neurally differentiated embryonal carcinoma cells.

The protein localises to the cytoplasm. It is found in the nucleus. It localises to the nucleoplasm. Its subcellular location is the nucleus matrix. Functionally, growth suppressor that facilitates the entry of the cell into cell cycle arrest. Functionally similar to the retinoblastoma protein it binds to and represses the activity of cell-cycle-promoting proteins such as SV40 large T antigen, adenovirus E1A, and the transcription factor E2F. Necdin also interacts with p53 and works in an additive manner to inhibit cell growth. Also functions as a transcription factor and directly binds to specific guanosine-rich DNA sequences. This Mus musculus (Mouse) protein is Necdin (Ndn).